We begin with the raw amino-acid sequence, 187 residues long: MLDDATYTPRLKTLYKDTIRGALKEEFGYKNEMQIPKLDKIVLNIGCGRAAVKDSKKAKSAQEDLTKIAGQKALTTVAKNSIAGFRVREGMPMGAKVTLRGERMYEFLDRLITIAMPRIRDFRGVSGTSFDGRGNYALGLKEHIVFPEIDFDKIDEAWGMDIVIATTANTDAEAKALLKAFNMPFNS.

Belongs to the universal ribosomal protein uL5 family. Part of the 50S ribosomal subunit; part of the 5S rRNA/L5/L18/L25 subcomplex. Contacts the 5S rRNA and the P site tRNA. Forms a bridge to the 30S subunit in the 70S ribosome.

In terms of biological role, this is one of the proteins that bind and probably mediate the attachment of the 5S RNA into the large ribosomal subunit, where it forms part of the central protuberance. In the 70S ribosome it contacts protein S13 of the 30S subunit (bridge B1b), connecting the 2 subunits; this bridge is implicated in subunit movement. Contacts the P site tRNA; the 5S rRNA and some of its associated proteins might help stabilize positioning of ribosome-bound tRNAs. This is Large ribosomal subunit protein uL5 from Ruegeria sp. (strain TM1040) (Silicibacter sp.).